Here is a 259-residue protein sequence, read N- to C-terminus: Complement factor D (259 aa).

The N-terminal stretch at 1-21 (MADRSGHLAALILLGAAVCVA) is a signal peptide. Positions 22 to 26 (QPRGR) are cleaved as a propeptide — activation peptide. A Peptidase S1 domain is found at 27–254 (ILGGQEAKSH…YVAWIDGVMA (228 aa)). Cysteines 52 and 68 form a disulfide. Residues His67 and Asp115 each act as charge relay system in the active site. Disulfide bonds link Cys149/Cys215, Cys180/Cys196, and Cys205/Cys230. Residue Ser209 is the Charge relay system of the active site. Residues 224–228 (TSGSR) are self-inhibitor loop.

It belongs to the peptidase S1 family. In terms of processing, CFD is activated by the removal of 5 residues at the N-terminus, named activation peptide, by the MASP-3 isoform of MASP1.

It localises to the secreted. It catalyses the reaction Selective cleavage of Arg-|-Lys bond in complement factor B when in complex with complement subcomponent C3b or with cobra venom factor.. Circulates in plasma in a mature but self-inhibited form. Activated by factor B (CFB), which displaces the self-inhibition loop. Associates with CFB complexed with complement C3b. Serine protease that initiates the alternative pathway of the complement system, a cascade of proteins that leads to phagocytosis and breakdown of pathogens and signaling that strengthens the adaptive immune system. In contrast to other complement pathways (classical, lectin and GZMK) that are directly activated by pathogens or antigen-antibody complexes, the alternative complement pathway is initiated by the spontaneous hydrolysis of complement C3. The alternative complement pathway acts as an amplification loop that enhances complement activation by mediating the formation of C3 and C5 convertases. Activated CFD cleaves factor B (CFB) when the latter is complexed with complement C3b, activating the C3 convertase of the alternative pathway. The polypeptide is Complement factor D (CFD) (Sus scrofa (Pig)).